A 119-amino-acid polypeptide reads, in one-letter code: Beta-2-microglobulin (119 aa).

A signal peptide spans 1–20 (MARFVVAALLVLLSLSGLEA). Positions 25–114 (PKIQVYSRHP…MTFPAPKTVK (90 aa)) constitute an Ig-like C1-type domain. Cys45 and Cys100 are joined by a disulfide.

It belongs to the beta-2-microglobulin family. In terms of assembly, heterodimer of an alpha chain and a beta chain. Beta-2-microglobulin is the beta-chain of major histocompatibility complex class I molecules.

Its subcellular location is the secreted. In terms of biological role, component of the class I major histocompatibility complex (MHC). Involved in the presentation of peptide antigens to the immune system. This chain is Beta-2-microglobulin (B2M), found in Pithecia irrorata (Gray monk saki).